The chain runs to 130 residues: Small ribosomal subunit protein uS8 (130 aa).

Belongs to the universal ribosomal protein uS8 family. Part of the 30S ribosomal subunit. Contacts proteins S5 and S12.

Functionally, one of the primary rRNA binding proteins, it binds directly to 16S rRNA central domain where it helps coordinate assembly of the platform of the 30S subunit. This is Small ribosomal subunit protein uS8 from Vibrio atlanticus (strain LGP32) (Vibrio splendidus (strain Mel32)).